We begin with the raw amino-acid sequence, 120 residues long: Holo-[acyl-carrier-protein] synthase (120 aa).

Residues Asp-8 and Glu-58 each contribute to the Mg(2+) site.

Belongs to the P-Pant transferase superfamily. AcpS family. Mg(2+) serves as cofactor.

It is found in the cytoplasm. The enzyme catalyses apo-[ACP] + CoA = holo-[ACP] + adenosine 3',5'-bisphosphate + H(+). Transfers the 4'-phosphopantetheine moiety from coenzyme A to a Ser of acyl-carrier-protein. This chain is Holo-[acyl-carrier-protein] synthase, found in Anoxybacillus flavithermus (strain DSM 21510 / WK1).